Here is a 192-residue protein sequence, read N- to C-terminus: Peptide methionine sulfoxide reductase MsrA 1 (192 aa).

Cysteine 25 is a catalytic residue.

It belongs to the MsrA Met sulfoxide reductase family.

It catalyses the reaction L-methionyl-[protein] + [thioredoxin]-disulfide + H2O = L-methionyl-(S)-S-oxide-[protein] + [thioredoxin]-dithiol. It carries out the reaction [thioredoxin]-disulfide + L-methionine + H2O = L-methionine (S)-S-oxide + [thioredoxin]-dithiol. Has an important function as a repair enzyme for proteins that have been inactivated by oxidation. Catalyzes the reversible oxidation-reduction of methionine sulfoxide in proteins to methionine. The protein is Peptide methionine sulfoxide reductase MsrA 1 of Rhodopirellula baltica (strain DSM 10527 / NCIMB 13988 / SH1).